Here is a 245-residue protein sequence, read N- to C-terminus: Syntaxin-61 (245 aa).

Over 1-224 (MSSAQDPFYI…VMKKAGAKGQ (224 aa)) the chain is Cytoplasmic. Residues 153–215 (MLLIKQQDEE…EFVQKKVGMV (63 aa)) form the t-SNARE coiled-coil homology domain. A helical; Anchor for type IV membrane protein transmembrane segment spans residues 225-245 (MMMICFLLVLFIILFVLVFLT).

This sequence belongs to the syntaxin family. Interacts with VTI12 and either SYP41, SYP42 or SYP51 in the trans-Golgi network or with VTI11 and SYP51 in the prevacuolar compartment to form t-SNARE complexes. Core constituent of the SNARE complex required for membrane fusion at the trans-Golgi network. Also observed in the SYP121-complex and cellulose synthases. Colocalizes with PIP2-7 and SYP121 in trafficking vesicles and at the plasma membrane. Interacts with SYP121 and PIP2-7. In terms of tissue distribution, expressed in root, leaf, stem, flower and silique, but not in hypocotyl or young leaf. Strong expression in the vasculature and in guard cells of the leaf epidermis.

The protein localises to the golgi apparatus. The protein resides in the trans-Golgi network membrane. Its subcellular location is the prevacuolar compartment membrane. Functionally, vesicle trafficking protein that functions in the secretory pathway; the fusion of phospholipid vesicles containing SYP61 and VTI12 is triggered by YKT61 and YKT62. Together with VTI12, required for membrane fusion. Involved in osmotic stress tolerance and in abscisic acid (ABA) regulation of stomatal responses. Plays a role in the exocytic trafficking of cellulose synthases (CESAs) and the transport of cell wall components to the plasma membrane. Together with SYP121, regulates the post-Golgi trafficking of the aquaporin PIP2-7 to the plasma membrane, thus modulating cell membrane water permeability. This Arabidopsis thaliana (Mouse-ear cress) protein is Syntaxin-61.